A 108-amino-acid chain; its full sequence is UPF0251 protein PF0620 (108 aa).

It belongs to the UPF0251 family.

The sequence is that of UPF0251 protein PF0620 from Pyrococcus furiosus (strain ATCC 43587 / DSM 3638 / JCM 8422 / Vc1).